A 173-amino-acid polypeptide reads, in one-letter code: MDITIQHPWFKRALGSLYPSRLFDQFFGEGLFEYDLLPFLSSTISPYYRQSLFRTVLESGISEVRSDRDRFVIYLDVKHFSPEDLTVKVLDDYVEIHGKHSERQDDHGYISREFHRRYRLPSNVDQSAISCSLSADGMLTFSGPKIHSNMESSHSDRSIPVSREEKPTLAPSS.

Met1 carries the N-acetylmethionine modification. Residues 1-63 (MDITIQHPWF…RTVLESGISE (63 aa)) are required for complex formation with BFSP1 and BFSP2. Gln6 is modified (deamidated glutamine; partial). Ser45 bears the Phosphoserine mark. Gln50 carries the post-translational modification Deamidated glutamine; partial. The sHSP domain occupies 52–164 (LFRTVLESGI…SDRSIPVSRE (113 aa)). Lys99 is subject to N6-acetyllysine. Zn(2+) is bound by residues His100, Glu102, and His107. Phosphoserine is present on Ser122. Asn123 is subject to Deamidated asparagine; partial. The segment at 144-173 (PKIHSNMESSHSDRSIPVSREEKPTLAPSS) is disordered. Basic and acidic residues predominate over residues 153 to 167 (SHSDRSIPVSREEKP). Residue His154 coordinates Zn(2+). Residue Ser162 is glycosylated (O-linked (GlcNAc) serine).

The protein belongs to the small heat shock protein (HSP20) family. As to quaternary structure, heteromer composed of three CRYAA and one CRYAB subunits. Inter-subunit bridging via zinc ions enhances stability, which is crucial as there is no protein turn over in the lens. Can also form homodimers and homotetramers (dimers of dimers) which serve as the building blocks of homooligomers. Within homooligomers, the zinc-binding motif is created from residues of 3 different molecules. His-100 and Glu-102 from one molecule are ligands of the zinc ion, and His-107 and His-154 residues from additional molecules complete the site with tetrahedral coordination geometry. Part of a complex required for lens intermediate filament formation composed of BFSP1, BFSP2 and CRYAA. Post-translationally, acetylation at Lys-99 may increase chaperone activity. Undergoes age-dependent proteolytical cleavage at the C-terminus.

Its subcellular location is the cytoplasm. The protein resides in the nucleus. Its function is as follows. Contributes to the transparency and refractive index of the lens. Acts as a chaperone, preventing aggregation of various proteins under a wide range of stress conditions. Required for the correct formation of lens intermediate filaments as part of a complex composed of BFSP1, BFSP2 and CRYAA. The sequence is that of Alpha-crystallin A chain (CRYAA) from Didelphis virginiana (North American opossum).